The chain runs to 595 residues: Beta-(1--&gt;2)glucan export ATP-binding/permease protein NdvA (595 aa).

A run of 5 helical transmembrane segments spans residues 21-41 (FLLI…EPIL), 56-76 (LVTL…YVLV), 129-149 (IWLE…VLVP), 158-178 (LSIV…LVMQ), and 252-272 (ISIV…QLSV). One can recognise an ABC transmembrane type-1 domain in the interval 21-301 (FLLICTANIT…ISGFINLAVS (281 aa)). The 235-residue stretch at 335–569 (IQFHHVTYEF…DGHFYKLLKA (235 aa)) folds into the ABC transporter domain. 368–375 (GPTGAGKT) lines the ATP pocket.

The protein belongs to the ABC transporter superfamily. Beta-(1--&gt;2)glucan exporter (TC 3.A.1.108.1) family. As to quaternary structure, homodimer.

It is found in the cell inner membrane. The catalysed reaction is [(1-&gt;2)-beta-D-glucosyl](n)(in) + ATP + H2O = [(1-&gt;2)-beta-D-glucosyl](n)(out) + ADP + phosphate + H(+). Involved in beta-(1--&gt;2)glucan export. Transmembrane domains (TMD) form a pore in the inner membrane and the ATP-binding domain (NBD) is responsible for energy generation. The polypeptide is Beta-(1--&gt;2)glucan export ATP-binding/permease protein NdvA (Bartonella bacilliformis (strain ATCC 35685 / KC583 / Herrer 020/F12,63)).